A 735-amino-acid polypeptide reads, in one-letter code: MEEYLLPGESSNSCRTRRRSGSIFDRRDAIAHGSAYQKAAALVDLAEDGIGLPEEILEGASFEKAAELYFMFTRFDFLWSLNYLALVVLNFFEKPLWCSKHLAESCNNRDYYYLGELPFLTGAESLIFEGVTLLLLIIHILFPISYEGFNLYWRSLLNRLKVILLLILVADIVVYILLPADFYYLPFRIAPYLRVVFFILNIRELRDSFFILAGMLGTYLNVVALSALFLLFSSWLAYVFFEDTRQGKTTFTSYGTTLYQMFVLFTTSNNPDVWIPAYKDSRWYCLFFVLYVLLGVYFVTNLILAVVYDSFKSELVKQVADKDRLRLRTLKKAFSLIDEANNGLLNEKQCTLLFEELNKYRTLPKISGDDFKSIFNELDDTGDFKINLEEFADLCSAIGLRFQKEDSLPIFEACPNFYHSPASEKLRGFIRGATFEYIIVFVLLVNLVAVIIETTLDIQNNSGQTFWQKVEFTFGWLYVIEMALKVYTYGFENYWRDGQNRFDFIVTWVIVIGETTTFVAPDDLTFLSNGEWIRYLLIARMLRLIRLLMHVERYRAFVATFLTLIPSLMPYLGTIFCILCFYCSLGLQIFGGIVNTGNPNLAQTDLAGNDYLLFNFNDYPNGMVTLFNILVMGNWQVWMQSYKELTGTSWTYAYFVSFYLISVLWLLNLIVAFVLEAFQAEMDLEASARCVDGDDKEAKRERRRNVGTKTRSQRVDFLLHHMLRSELTECSNDNP.

Residues 1–76 (MEEYLLPGES…ELYFMFTRFD (76 aa)) lie on the Cytoplasmic side of the membrane. A helical membrane pass occupies residues 77–97 (FLWSLNYLALVVLNFFEKPLW). The Extracellular portion of the chain corresponds to 98–125 (CSKHLAESCNNRDYYYLGELPFLTGAES). A helical membrane pass occupies residues 126 to 146 (LIFEGVTLLLLIIHILFPISY). The Cytoplasmic segment spans residues 147-161 (EGFNLYWRSLLNRLK). A helical membrane pass occupies residues 162–182 (VILLLILVADIVVYILLPADF). A topological domain (extracellular) is located at residue Tyr183. A helical; Voltage-sensor transmembrane segment spans residues 184–202 (YLPFRIAPYLRVVFFILNI). Topologically, residues 203-208 (RELRDS) are cytoplasmic. Residues 209–229 (FFILAGMLGTYLNVVALSALF) form a helical membrane-spanning segment. At 230–248 (LLFSSWLAYVFFEDTRQGK) the chain is on the extracellular side. The segment at residues 249–263 (TTFTSYGTTLYQMFV) is an intramembrane region (pore-forming). At 264–286 (LFTTSNNPDVWIPAYKDSRWYCL) the chain is on the extracellular side. A helical membrane pass occupies residues 287-307 (FFVLYVLLGVYFVTNLILAVV). Residues 308–431 (YDSFKSELVK…ASEKLRGFIR (124 aa)) are Cytoplasmic-facing. EF-hand domains lie at 325–360 (LRLR…LNKY) and 366–401 (ISGD…IGLR). A helical membrane pass occupies residues 432–452 (GATFEYIIVFVLLVNLVAVII). Residues 453–470 (ETTLDIQNNSGQTFWQKV) lie on the Extracellular side of the membrane. N-linked (GlcNAc...) asparagine glycosylation occurs at Asn460. The helical transmembrane segment at 471–491 (EFTFGWLYVIEMALKVYTYGF) threads the bilayer. Residues 492–501 (ENYWRDGQNR) are Cytoplasmic-facing. Residues 502 to 522 (FDFIVTWVIVIGETTTFVAPD) traverse the membrane as a helical segment. Residues 523–531 (DLTFLSNGE) lie on the Extracellular side of the membrane. Residues 532-549 (WIRYLLIARMLRLIRLLM) traverse the membrane as a helical; Voltage-sensor segment. Over 550 to 560 (HVERYRAFVAT) the chain is Cytoplasmic. The chain crosses the membrane as a helical span at residues 561 to 581 (FLTLIPSLMPYLGTIFCILCF). At 582–618 (YCSLGLQIFGGIVNTGNPNLAQTDLAGNDYLLFNFND) the chain is on the extracellular side. The pore-forming intramembrane region spans 619-633 (YPNGMVTLFNILVMG). Over 634–654 (NWQVWMQSYKELTGTSWTYAY) the chain is Extracellular. The helical transmembrane segment at 655 to 675 (FVSFYLISVLWLLNLIVAFVL) threads the bilayer. Over 676 to 735 (EAFQAEMDLEASARCVDGDDKEAKRERRRNVGTKTRSQRVDFLLHHMLRSELTECSNDNP) the chain is Cytoplasmic.

Belongs to the calcium channel alpha-1 subunit (TC 1.A.1.11) family. Two pore calcium channel subfamily. In terms of assembly, homodimer.

The protein resides in the membrane. With respect to regulation, inhibited by Al(3+), La(3+) and Gd(3+). Up-regulated by H(2)O(2), cryptogein, salicylic acid (SA) and cold shock. Functions as a voltage-gated inward-rectifying Ca(2+) channel (VDCC) across the plasma membrane that mediates sucrose-induced Ca(2+) influx in autotrophically grown leaf cells. Acts as the major ROS-responsive Ca(2+) channel and is the possible target of Al-dependent inhibition. Plays a regulatory role in defense responses. The polypeptide is Two pore calcium channel protein 1B (TPC1B) (Nicotiana tabacum (Common tobacco)).